The sequence spans 308 residues: 2-methylisocitrate lyase (308 aa).

A substrate-binding site is contributed by 51-53; sequence SGA. Mg(2+)-binding residues include D90 and D92. Substrate contacts are provided by residues 127-128, R160, E190, 212-214, R243, and R272; these read CG and NMT.

This sequence belongs to the isocitrate lyase/PEP mutase superfamily. Methylisocitrate lyase family. As to quaternary structure, homotetramer; dimer of dimers. Mg(2+) is required as a cofactor.

The catalysed reaction is (2S,3R)-3-hydroxybutane-1,2,3-tricarboxylate = pyruvate + succinate. It functions in the pathway organic acid metabolism; propanoate degradation. Its function is as follows. Involved in the catabolism of short chain fatty acids (SCFA) via the 2-methylcitrate cycle I (propionate degradation route). Catalyzes the thermodynamically favored C-C bond cleavage of (2R,3S)-2-methylisocitrate to yield pyruvate and succinate via an alpha-carboxy-carbanion intermediate. The sequence is that of 2-methylisocitrate lyase from Aeropyrum pernix (strain ATCC 700893 / DSM 11879 / JCM 9820 / NBRC 100138 / K1).